The sequence spans 91 residues: uncharacterized protein (91 aa).

3 helical membrane passes run 9–29 (LIHA…YTAG), 30–50 (LGIF…VIFG), and 67–87 (WLGC…VLKF).

It is found in the cell membrane. This is an uncharacterized protein from Methanocaldococcus jannaschii (strain ATCC 43067 / DSM 2661 / JAL-1 / JCM 10045 / NBRC 100440) (Methanococcus jannaschii).